A 138-amino-acid chain; its full sequence is Acidic phospholipase A2 Cvv-E6b (138 aa).

Positions 1-16 are cleaved as a signal peptide; sequence MRTLWILAVLLLGVEG. Intrachain disulfides connect C42/C131, C44/C60, C59/C111, C65/C138, C66/C104, C73/C97, and C91/C102. The Ca(2+) site is built by Y43, G45, and G47. The active site involves H63. Position 64 (D64) interacts with Ca(2+). Residue D105 is part of the active site.

Ca(2+) serves as cofactor. As to expression, expressed by the venom gland.

Its subcellular location is the secreted. The catalysed reaction is a 1,2-diacyl-sn-glycero-3-phosphocholine + H2O = a 1-acyl-sn-glycero-3-phosphocholine + a fatty acid + H(+). Functionally, snake venom phospholipase A2 (PLA2) that shows very low inhibition of ADP-induced platelet aggregation in platelet-rich plasma of human, rabbit and guinea pig. PLA2 catalyzes the calcium-dependent hydrolysis of the 2-acyl groups in 3-sn-phosphoglycerides. This is Acidic phospholipase A2 Cvv-E6b from Crotalus viridis viridis (Prairie rattlesnake).